The following is a 339-amino-acid chain: MKTYILTSPKNIPYFNAALEEWLLTEFKKGEEIKVIYFWQNANTIVVGRNQNTYAEVNLSEVEKDKVNLFRRFSGGGAVFHDMGNICFSIILPKAKKEMENAYEETTRNVVKFLNSVGVPAQFHGRNDLEIEGKKFSGLAEYLSKDRVLVHGTLLFDTDFTKLAKYLNVDKTKMVSKGIESVQKRVVNVKEYLPNLSTPTFLEKMVQFFTETEHAETIHLDESSIKMVEKRAQEHFQSWDWNFGKTADYNFKNKKRFEGAGIFECNVQVDQGKVVDIKFYGDFLSVIDITPVTQQLVGQKYDYQTFAKILGNIDNFKEYFGTLTPQQMLEVIFDNKKDE.

The BPL/LPL catalytic domain occupies 30-217 (GEEIKVIYFW…FFTETEHAET (188 aa)). ATP-binding positions include R72, 77–80 (GAVF), and K135. K135 contacts (R)-lipoate.

The protein belongs to the LplA family.

It is found in the cytoplasm. The enzyme catalyses L-lysyl-[lipoyl-carrier protein] + (R)-lipoate + ATP = N(6)-[(R)-lipoyl]-L-lysyl-[lipoyl-carrier protein] + AMP + diphosphate + H(+). Its pathway is protein modification; protein lipoylation via exogenous pathway; protein N(6)-(lipoyl)lysine from lipoate: step 1/2. It functions in the pathway protein modification; protein lipoylation via exogenous pathway; protein N(6)-(lipoyl)lysine from lipoate: step 2/2. Catalyzes both the ATP-dependent activation of exogenously supplied lipoate to lipoyl-AMP and the transfer of the activated lipoyl onto the lipoyl domains of lipoate-dependent enzymes. This Mycoplasma pneumoniae (strain ATCC 29342 / M129 / Subtype 1) (Mycoplasmoides pneumoniae) protein is Probable lipoate-protein ligase A (lplA).